A 357-amino-acid chain; its full sequence is Glutamine synthetase root isozyme 1 (357 aa).

Residues 19-99 (IIAEYIWIGG…VMCDCYTPQG (81 aa)) enclose the GS beta-grasp domain. A GS catalytic domain is found at 106-357 (KRYSAAKVFS…AETTILWNGN (252 aa)).

The protein belongs to the glutamine synthetase family. In terms of assembly, homooctamer. As to expression, found mainly in the cortical tissues of seedling roots, and in the root tip.

The protein resides in the cytoplasm. It catalyses the reaction L-glutamate + NH4(+) + ATP = L-glutamine + ADP + phosphate + H(+). Functionally, plays a role in the flow of nitrogen into nitrogenous organic compounds. The protein is Glutamine synthetase root isozyme 1 (GLN6) of Zea mays (Maize).